The following is a 315-amino-acid chain: Mitochondrial glycine transporter (315 aa).

Solcar repeat units follow at residues 19-102 (SKTT…LRTG), 125-206 (TANL…LKRR), and 221-305 (KSSS…LILR). 6 helical membrane passes run 25-50 (FTAGLFSGLTSSILLQPADLLKTRVQ), 77-103 (GTLPSALRTGFGSALYFTSLNALRTGL), 128-153 (LATGAAARVAAGFVMMPVTVIKVRYE), 181-204 (GFGATAARDAPYAGLYVLFYEQLK), 225-251 (INFVSGGLAAGLATTITNPFDAVKTRL), and 280-298 (GLGLRITRKALSSALAWTV).

The protein belongs to the mitochondrial carrier (TC 2.A.29) family. SLC25A38 subfamily.

It localises to the mitochondrion inner membrane. It carries out the reaction glycine(in) = glycine(out). Its function is as follows. Mitochondrial glycine transporter that imports glycine into the mitochondrial matrix. Plays an important role in providing glycine for the first enzymatic step in heme biosynthesis, the condensation of glycine with succinyl-CoA to produce 5-aminolevulinate (ALA) in the mitochondrial matrix. The chain is Mitochondrial glycine transporter from Aspergillus niger (strain ATCC MYA-4892 / CBS 513.88 / FGSC A1513).